A 200-amino-acid polypeptide reads, in one-letter code: Recombination protein RecR (200 aa).

Residues 57-72 (CSECRTFTEEDTCAIC) form a C4-type zinc finger. The 96-residue stretch at 81–176 (GELCIVESPA…SASRIAHGVP (96 aa)) folds into the Toprim domain.

The protein belongs to the RecR family.

May play a role in DNA repair. It seems to be involved in an RecBC-independent recombinational process of DNA repair. It may act with RecF and RecO. The protein is Recombination protein RecR of Aliivibrio salmonicida (strain LFI1238) (Vibrio salmonicida (strain LFI1238)).